The following is a 456-amino-acid chain: O-phospho-L-seryl-tRNA:Cys-tRNA synthase 2 (456 aa).

Pyridoxal 5'-phosphate contacts are provided by residues 146-147 (AR), N251, and 274-276 (SGH). Residue K277 is modified to N6-(pyridoxal phosphate)lysine.

This sequence belongs to the SepCysS family. In terms of assembly, homodimer. Interacts with SepRS. Pyridoxal 5'-phosphate is required as a cofactor.

It carries out the reaction O-phospho-L-seryl-tRNA(Cys) + hydrogen sulfide + H(+) = L-cysteinyl-tRNA(Cys) + phosphate. In terms of biological role, converts O-phospho-L-seryl-tRNA(Cys) (Sep-tRNA(Cys)) to L-cysteinyl-tRNA(Cys) (Cys-tRNA(Cys)). This Methanospirillum hungatei JF-1 (strain ATCC 27890 / DSM 864 / NBRC 100397 / JF-1) protein is O-phospho-L-seryl-tRNA:Cys-tRNA synthase 2.